Reading from the N-terminus, the 145-residue chain is 3-dehydroquinate dehydratase (145 aa).

Tyr-24 functions as the Proton acceptor in the catalytic mechanism. 3 residues coordinate substrate: Asn-75, His-81, and Asp-88. Residue His-101 is the Proton donor of the active site. Residues 102–103 (IS) and Arg-112 each bind substrate.

The protein belongs to the type-II 3-dehydroquinase family. As to quaternary structure, homododecamer.

The enzyme catalyses 3-dehydroquinate = 3-dehydroshikimate + H2O. It functions in the pathway metabolic intermediate biosynthesis; chorismate biosynthesis; chorismate from D-erythrose 4-phosphate and phosphoenolpyruvate: step 3/7. In terms of biological role, catalyzes a trans-dehydration via an enolate intermediate. The protein is 3-dehydroquinate dehydratase (aroQ) of Corynebacterium glutamicum (strain ATCC 13032 / DSM 20300 / JCM 1318 / BCRC 11384 / CCUG 27702 / LMG 3730 / NBRC 12168 / NCIMB 10025 / NRRL B-2784 / 534).